We begin with the raw amino-acid sequence, 383 residues long: MVSRPHGGRLVRRVLSGRRREIFESQYREMPRLEVPLERAIDAEDLARGVFSPLEGFMVEDDYLSVLSRMRLSNDLPWTIPIVLDANREWVLNEGVSAGDDIILTYHGLPIAVLTLEDIYSWDKGLHAEKVFKTRDPNHPGVEATYKRGDILLGGRLELIQGPPNPLERYTLWPVETRVLFKEKGWRTVAAFQTRNVPHLGHEYVQKAALTFVDGLLVHPLAGWKKRGDYRDEVIIRAYEALITHYYPRGVVVLSVLRMNMNYAGPREAVHHAIVRKNFGATHFIVGRDHAGVGSYYGPYEAWEIFREFPDLGITPLFVREAYYCRRCGGMVNEKVCPHGDEYRVRISGTRLREMLGRGERPPEYMMRPEVADAIISHPDPFI.

It belongs to the sulfate adenylyltransferase family.

The catalysed reaction is sulfate + ATP + H(+) = adenosine 5'-phosphosulfate + diphosphate. It participates in sulfur metabolism; hydrogen sulfide biosynthesis; sulfite from sulfate: step 1/3. The polypeptide is Sulfate adenylyltransferase (sat) (Aeropyrum pernix (strain ATCC 700893 / DSM 11879 / JCM 9820 / NBRC 100138 / K1)).